A 303-amino-acid chain; its full sequence is MNKMNNIFLIISSIILSIVIFVSGECAIDFSSEISVGISDSQWSCLASNNQRVIIQVWSGGGQYNSNISSVVSAAEQAGFDNIDLYAFLCSECDGNYPASSAIQSLVSSLKSDGINFNMLWIDVEQCDGCWGAESDNADYVQEAVETAQGLGVLVGVYSSEGEWPQTVGNLSTLSQYPLWYAHYDDNPSFSDTAFYEFGGWTSPAMKQYIGNTNQCGVSVDLDFYGSGSGCSTSSGSASGSASGSASGSASGSNSGSSNSGSSNSGSSNSGSNSGSSNSGSGNSGSSNSGSASGSGTGSGSSI.

The first 24 residues, 1 to 24 (MNKMNNIFLIISSIILSIVIFVSG), serve as a signal peptide directing secretion. A Ch-type lysozyme domain is found at 28–240 (IDFSSEISVG…CSTSSGSASG (213 aa)). Asn-67 carries N-linked (GlcNAc...) asparagine glycosylation. Residue Glu-125 is part of the active site. The N-linked (GlcNAc...) asparagine glycan is linked to Asn-170. The tract at residues 226-303 (GSGSGCSTSS…GSGTGSGSSI (78 aa)) is S-G-S motif repeats. A compositionally biased stretch (low complexity) spans 236–292 (GSASGSASGSASGSASGSNSGSSNSGSSNSGSSNSGSNSGSSNSGSGNSGSSNSGSA). The tract at residues 236–303 (GSASGSASGS…GSGTGSGSSI (68 aa)) is disordered. Over residues 293–303 (SGSGTGSGSSI) the composition is skewed to gly residues.

Belongs to the glycosyl hydrolase 25 family. In terms of assembly, monomer. Component of the counting factor (CF) complex, which includes cf60, cf50, cf45-1 and ctnA.

Its subcellular location is the secreted. The catalysed reaction is Hydrolysis of (1-&gt;4)-beta-linkages between N-acetylmuramic acid and N-acetyl-D-glucosamine residues in a peptidoglycan and between N-acetyl-D-glucosamine residues in chitodextrins.. In terms of biological role, cell-counting factor that limits the maximum size of the multicellular structure during aggregation. Has a very low lysozyme activity. The protein is Counting factor 50 (cf50-1) of Dictyostelium discoideum (Social amoeba).